The sequence spans 223 residues: Cytidine deaminase 3 (223 aa).

CMP/dCMP-type deaminase domains follow at residues 21 to 154 (TEPM…FSPD) and 184 to 223 (SDCS…WYRG). A substrate-binding site is contributed by 62–64 (NVE). His-75 is a binding site for Zn(2+). Residue Glu-77 is the Proton donor of the active site. 2 residues coordinate Zn(2+): Cys-110 and Cys-113.

Belongs to the cytidine and deoxycytidylate deaminase family. As to quaternary structure, homodimer. Zn(2+) serves as cofactor.

The enzyme catalyses cytidine + H2O + H(+) = uridine + NH4(+). It catalyses the reaction 2'-deoxycytidine + H2O + H(+) = 2'-deoxyuridine + NH4(+). In terms of biological role, this enzyme scavenges exogenous and endogenous cytidine and 2'-deoxycytidine for UMP synthesis. In Arabidopsis thaliana (Mouse-ear cress), this protein is Cytidine deaminase 3 (CDA3).